Reading from the N-terminus, the 202-residue chain is Small ribosomal subunit protein uS4c (202 aa).

The 69-residue stretch at 90 to 158 (MRSDNVIFRL…ISKNIELYQK (69 aa)) folds into the S4 RNA-binding domain.

This sequence belongs to the universal ribosomal protein uS4 family. In terms of assembly, part of the 30S ribosomal subunit. Contacts protein S5. The interaction surface between S4 and S5 is involved in control of translational fidelity.

The protein localises to the plastid. It localises to the chloroplast. Its function is as follows. One of the primary rRNA binding proteins, it binds directly to 16S rRNA where it nucleates assembly of the body of the 30S subunit. Functionally, with S5 and S12 plays an important role in translational accuracy. The chain is Small ribosomal subunit protein uS4c (rps4) from Anthoceros punctatus (Hornwort).